Consider the following 145-residue polypeptide: 3-dehydroquinate dehydratase 2 (145 aa).

The Proton acceptor role is filled by Tyr22. Substrate contacts are provided by Asn73, His79, and Asp86. The Proton donor role is filled by His101. Residues 102-103 and Arg112 each bind substrate; that span reads IS.

It belongs to the type-II 3-dehydroquinase family. Homododecamer.

The enzyme catalyses 3-dehydroquinate = 3-dehydroshikimate + H2O. The protein operates within metabolic intermediate biosynthesis; chorismate biosynthesis; chorismate from D-erythrose 4-phosphate and phosphoenolpyruvate: step 3/7. In terms of biological role, catalyzes a trans-dehydration via an enolate intermediate. The polypeptide is 3-dehydroquinate dehydratase 2 (aroQ2) (Corynebacterium efficiens (strain DSM 44549 / YS-314 / AJ 12310 / JCM 11189 / NBRC 100395)).